A 377-amino-acid chain; its full sequence is Succinyl-diaminopimelate desuccinylase (377 aa).

Residue His-66 participates in Zn(2+) binding. Asp-68 is a catalytic residue. Residue Asp-99 participates in Zn(2+) binding. The active-site Proton acceptor is the Glu-133. Residues Glu-134, Glu-163, and His-349 each coordinate Zn(2+).

Belongs to the peptidase M20A family. DapE subfamily. Homodimer. Requires Zn(2+) as cofactor. Co(2+) is required as a cofactor.

The catalysed reaction is N-succinyl-(2S,6S)-2,6-diaminopimelate + H2O = (2S,6S)-2,6-diaminopimelate + succinate. Its pathway is amino-acid biosynthesis; L-lysine biosynthesis via DAP pathway; LL-2,6-diaminopimelate from (S)-tetrahydrodipicolinate (succinylase route): step 3/3. Functionally, catalyzes the hydrolysis of N-succinyl-L,L-diaminopimelic acid (SDAP), forming succinate and LL-2,6-diaminopimelate (DAP), an intermediate involved in the bacterial biosynthesis of lysine and meso-diaminopimelic acid, an essential component of bacterial cell walls. This Legionella pneumophila (strain Lens) protein is Succinyl-diaminopimelate desuccinylase.